A 100-amino-acid chain; its full sequence is Large ribosomal subunit protein uL23 (100 aa).

Belongs to the universal ribosomal protein uL23 family. As to quaternary structure, part of the 50S ribosomal subunit. Contacts protein L29, and trigger factor when it is bound to the ribosome.

In terms of biological role, one of the early assembly proteins it binds 23S rRNA. One of the proteins that surrounds the polypeptide exit tunnel on the outside of the ribosome. Forms the main docking site for trigger factor binding to the ribosome. This chain is Large ribosomal subunit protein uL23, found in Mycobacterium tuberculosis (strain ATCC 25177 / H37Ra).